Reading from the N-terminus, the 236-residue chain is 2,3,4,5-tetrahydropyridine-2,6-dicarboxylate N-acetyltransferase (236 aa).

This sequence belongs to the transferase hexapeptide repeat family. DapH subfamily.

The catalysed reaction is (S)-2,3,4,5-tetrahydrodipicolinate + acetyl-CoA + H2O = L-2-acetamido-6-oxoheptanedioate + CoA. Its pathway is amino-acid biosynthesis; L-lysine biosynthesis via DAP pathway; LL-2,6-diaminopimelate from (S)-tetrahydrodipicolinate (acetylase route): step 1/3. Catalyzes the transfer of an acetyl group from acetyl-CoA to tetrahydrodipicolinate. The protein is 2,3,4,5-tetrahydropyridine-2,6-dicarboxylate N-acetyltransferase of Clostridium botulinum (strain Loch Maree / Type A3).